The primary structure comprises 101 residues: Large ribosomal subunit protein uL24 (101 aa).

This sequence belongs to the universal ribosomal protein uL24 family. As to quaternary structure, part of the 50S ribosomal subunit.

One of two assembly initiator proteins, it binds directly to the 5'-end of the 23S rRNA, where it nucleates assembly of the 50S subunit. Its function is as follows. One of the proteins that surrounds the polypeptide exit tunnel on the outside of the subunit. In Streptococcus thermophilus (strain ATCC BAA-491 / LMD-9), this protein is Large ribosomal subunit protein uL24.